Reading from the N-terminus, the 978-residue chain is Serine/threonine-protein kinase PLK4 (978 aa).

The Protein kinase domain maps to phenylalanine 13–isoleucine 266. ATP contacts are provided by residues leucine 19 to valine 27 and lysine 42. The Proton acceptor role is filled by aspartate 137. Polar residues-rich tracts occupy residues leucine 271–histidine 282 and serine 291–threonine 304. Disordered stretches follow at residues leucine 271–serine 381, isoleucine 489–leucine 578, alanine 788–serine 818, and alanine 838–proline 869. The segment covering arginine 324–histidine 335 has biased composition (basic and acidic residues). Composition is skewed to polar residues over residues threonine 351–valine 362 and alanine 371–serine 381. Composition is skewed to basic and acidic residues over residues glycine 518–aspartate 527 and glutamate 536–leucine 566. The region spanning serine 565–leucine 678 is the Cryptic POLO box 1 (CPB1) domain. The 114-residue stretch at threonine 679 to serine 792 folds into the Cryptic POLO box 2 (CPB2) domain. Positions glutamine 801–serine 818 are enriched in polar residues. Basic residues predominate over residues lysine 848–glutamine 862. Residues histidine 895–threonine 973 enclose the POLO box domain.

It belongs to the protein kinase superfamily. Ser/Thr protein kinase family. CDC5/Polo subfamily. As to quaternary structure, homodimer. Post-translationally, ubiquitinated; leading to its degradation by the proteasome.

The protein localises to the cytoplasm. Its subcellular location is the cytoskeleton. It localises to the microtubule organizing center. It is found in the centrosome. The protein resides in the centriole. It carries out the reaction L-seryl-[protein] + ATP = O-phospho-L-seryl-[protein] + ADP + H(+). The enzyme catalyses L-threonyl-[protein] + ATP = O-phospho-L-threonyl-[protein] + ADP + H(+). Its function is as follows. Serine/threonine-protein kinase that plays a central role in centriole duplication. Able to trigger procentriole formation on the surface of the mother centriole cylinder, leading to the recruitment of centriole biogenesis proteins. When overexpressed, it is able to induce centrosome amplification through the simultaneous generation of multiple procentrioles adjoining each parental centriole during S phase. The polypeptide is Serine/threonine-protein kinase PLK4 (Nematostella vectensis (Starlet sea anemone)).